Consider the following 566-residue polypeptide: OTU domain-containing protein 5 (566 aa).

Disordered stretches follow at residues 1 to 117 (MTIL…GDAL) and 146 to 175 (PGHS…GAGY). A compositionally biased stretch (pro residues) spans 11-30 (PPDADPANEPPPPGPLPPAP). Over residues 32–47 (RGGGVGVGGGGTGVGG) the composition is skewed to gly residues. Over residues 63–75 (ASPPPQGPLPGPP) the composition is skewed to pro residues. The residue at position 64 (Ser64) is a Phosphoserine. The span at 84–97 (AVPPGAVAGPRPQQ) shows a compositional bias: low complexity. A compositionally biased stretch (gly residues) spans 105–115 (GPGGPGGGPGD). Ser165 carries the phosphoserine modification. Position 175 is a phosphotyrosine (Tyr175). Residue Ser177 is modified to Phosphoserine. A Phosphothreonine modification is found at Thr195. One can recognise an OTU domain in the interval 213-336 (FIIKQMKEDG…NIHYNSVVNP (124 aa)). The segment at 218 to 224 (MKEDGAC) is cys-loop. Asp221 is an active-site residue. Cys224 functions as the Nucleophile in the catalytic mechanism. Residues 273–283 (KRKNNCHGNHI) form a variable-loop region. The residue at position 323 (Ser323) is a Phosphoserine. Residues 324-329 (YHRNIH) form a his-loop region. The active site involves His329. Ser332 and Ser370 each carry phosphoserine. The disordered stretch occupies residues 413–497 (ARQVRGPSQP…PGTSSQFSAG (85 aa)). Composition is skewed to low complexity over residues 425-438 (ASAT…AASS) and 445-457 (SRSP…ASSP). The residue at position 447 (Ser447) is a Phosphoserine. Phosphothreonine is present on Thr502. Position 503 is a phosphoserine (Ser503).

It belongs to the peptidase C85 family. In terms of assembly, interacts with TRAF3. Post-translationally, phosphorylation at Ser-177 is required for deubiquitinating activity. Phosphorylation at Ser-323, Ser-332 and Ser-503 by MTOR promotes its activity.

The protein localises to the nucleus. The enzyme catalyses Thiol-dependent hydrolysis of ester, thioester, amide, peptide and isopeptide bonds formed by the C-terminal Gly of ubiquitin (a 76-residue protein attached to proteins as an intracellular targeting signal).. Inhibited by N-ethyl-maleimide (NEM). Its function is as follows. Deubiquitinating enzyme that functions as a negative regulator of the innate immune system. Has peptidase activity towards 'Lys-48'- and 'Lys-63'-linked polyubiquitin chains. Can also cleave 'Lys-11'-linked ubiquitin chains (in vitro). Acts via TRAF3 deubiquitination and subsequent suppression of type I interferon (IFN) production. Controls neuroectodermal differentiation through cleaving 'Lys-48'-linked ubiquitin chains to counteract degradation of select chromatin regulators such as ARID1A, HDAC2 and HCF1. Acts as a positive regulator of mTORC1 and mTORC2 signaling following phosphorylation by MTOR: acts by mediating deubiquitination of BTRC, leading to its stability. In Rattus norvegicus (Rat), this protein is OTU domain-containing protein 5.